Reading from the N-terminus, the 357-residue chain is Elongation factor Ts (357 aa).

An involved in Mg(2+) ion dislocation from EF-Tu region spans residues 82 to 85 (TDFV).

Belongs to the EF-Ts family.

Its subcellular location is the cytoplasm. In terms of biological role, associates with the EF-Tu.GDP complex and induces the exchange of GDP to GTP. It remains bound to the aminoacyl-tRNA.EF-Tu.GTP complex up to the GTP hydrolysis stage on the ribosome. This is Elongation factor Ts from Campylobacter jejuni (strain RM1221).